We begin with the raw amino-acid sequence, 335 residues long: Polyprenol dehydrogenase (335 aa).

Isoleucine 55, tyrosine 208, lysine 212, and threonine 245 together coordinate NAD(+). Catalysis depends on tyrosine 208, which acts as the Proton acceptor.

The protein belongs to the short-chain dehydrogenases/reductases (SDR) family.

It localises to the lipid droplet. It is found in the secreted. The enzyme catalyses a di-trans,poly-cis-polyprenol + NAD(+) = a di-trans,poly-cis-polyprenal + NADH + H(+). It catalyses the reaction a di-trans,poly-cis-polyprenol + NADP(+) = a di-trans,poly-cis-polyprenal + NADPH + H(+). It carries out the reaction a di-trans,poly-cis-dolichol + NADP(+) = a di-trans,poly-cis-dolichal + NADPH + H(+). The catalysed reaction is a di-trans,poly-cis-dolichol + NAD(+) = a di-trans,poly-cis-dolichal + NADH + H(+). It participates in protein modification; protein glycosylation. Oxidoreductase that plays a key role in early steps of protein N-linked glycosylation by mediating two non-consecutive steps in dolichol biosynthesis. Acts both as a NAD(+)-dependent dehydrogenase and as a NADPH-dependent reductase during the conversion of polyprenol into dolichol. First catalyzes the NAD(+)-dependent dehydrogenation of polyprenol into polyprenal; polyprenal is then reduced into dolichal by SRD5A3. It then catalyzes the NADPH-dependent reduction of dolichal into dolichol. May also acts as a positive regulator of starvation-induced autophagy. The protein is Polyprenol dehydrogenase (Dhrsx) of Mus musculus (Mouse).